The chain runs to 82 residues: Large ribosomal subunit protein uL24c (82 aa).

Belongs to the universal ribosomal protein uL24 family. Part of the 50S ribosomal subunit.

It localises to the plastid. The protein resides in the chloroplast. One of two assembly initiator proteins, it binds directly to the 5'-end of the 23S rRNA, where it nucleates assembly of the 50S subunit. The polypeptide is Large ribosomal subunit protein uL24c (rpl24) (Phaeodactylum tricornutum (strain CCAP 1055/1)).